The chain runs to 218 residues: Adenylate kinase (218 aa).

Residue 10–15 (GAGKGT) coordinates ATP. Positions 30 to 59 (STGDMLRAAVKAGTPLGLEAKKVMDAGGLV) are NMP. AMP is bound by residues Thr-31, Arg-36, 57–59 (GLV), 85–88 (GFPR), and Gln-92. The interval 122–159 (GRRVHPASGRVYHTKYNPPKVEGKDDETGDELVQRDDD) is LID. ATP contacts are provided by residues Arg-123 and 132–133 (VY). Positions 139 to 160 (PPKVEGKDDETGDELVQRDDDQ) are disordered. Positions 156 and 167 each coordinate AMP. ATP is bound at residue Gly-203.

This sequence belongs to the adenylate kinase family. Monomer.

Its subcellular location is the cytoplasm. The enzyme catalyses AMP + ATP = 2 ADP. Its pathway is purine metabolism; AMP biosynthesis via salvage pathway; AMP from ADP: step 1/1. In terms of biological role, catalyzes the reversible transfer of the terminal phosphate group between ATP and AMP. Plays an important role in cellular energy homeostasis and in adenine nucleotide metabolism. The protein is Adenylate kinase of Alcanivorax borkumensis (strain ATCC 700651 / DSM 11573 / NCIMB 13689 / SK2).